Reading from the N-terminus, the 303-residue chain is Eukaryotic translation initiation factor 3 subunit G (303 aa).

Disordered stretches follow at residues 1-32, 81-100, 105-126, and 181-215; these read MAAVAKPVQAWADDDDIDDGTTERLPDPQTIV, GLSAKDGPGPASDTTSVGEN, PSANWRKDQKDESKDANANAMK, and GAAGGAGAKKGSYVPPALRGDRKEGEKMGGGAGGK. Basic and acidic residues predominate over residues 109-126; it reads WRKDQKDESKDANANAMK. The 79-residue stretch at 223–301 folds into the RRM domain; that stretch reads ATLRVTNVSE…LILRVEFAKK (79 aa).

This sequence belongs to the eIF-3 subunit G family. As to quaternary structure, component of the eukaryotic translation initiation factor 3 (eIF-3) complex.

The protein resides in the cytoplasm. RNA-binding component of the eukaryotic translation initiation factor 3 (eIF-3) complex, which is involved in protein synthesis of a specialized repertoire of mRNAs and, together with other initiation factors, stimulates binding of mRNA and methionyl-tRNAi to the 40S ribosome. The eIF-3 complex specifically targets and initiates translation of a subset of mRNAs involved in cell proliferation. This subunit can bind 18S rRNA. This is Eukaryotic translation initiation factor 3 subunit G from Pyricularia oryzae (strain 70-15 / ATCC MYA-4617 / FGSC 8958) (Rice blast fungus).